We begin with the raw amino-acid sequence, 165 residues long: NADPH-dependent 7-cyano-7-deazaguanine reductase (165 aa).

Catalysis depends on Cys56, which acts as the Thioimide intermediate. Asp63 functions as the Proton donor in the catalytic mechanism. Substrate is bound by residues 78 to 80 (VES) and 97 to 98 (HE).

It belongs to the GTP cyclohydrolase I family. QueF type 1 subfamily.

Its subcellular location is the cytoplasm. It catalyses the reaction 7-aminomethyl-7-carbaguanine + 2 NADP(+) = 7-cyano-7-deazaguanine + 2 NADPH + 3 H(+). It participates in tRNA modification; tRNA-queuosine biosynthesis. Is totally inhibited by 4-aminobenzylcyanide in vitro. In terms of biological role, catalyzes the NADPH-dependent reduction of 7-cyano-7-deazaguanine (preQ0) to 7-aminomethyl-7-deazaguanine (preQ1), a late step in the queuosine pathway. Is highly specific for its natural substrate preQ0, since it cannot use various aliphatic, aromatic and heterocyclic nitriles, although it can reduce the substrate analog 5-cyanopyrrolo[2,3-d]pyrimidin-4-one with lesser efficiency. The polypeptide is NADPH-dependent 7-cyano-7-deazaguanine reductase (Geobacillus kaustophilus (strain HTA426)).